The sequence spans 876 residues: DNA gyrase subunit A (876 aa).

The Topo IIA-type catalytic domain occupies 34–532 (LPDVRDGLKP…NSVDINIEDL (499 aa)). Catalysis depends on Tyr-122, which acts as the O-(5'-phospho-DNA)-tyrosine intermediate. The GyrA-box signature appears at 559-565 (QRRGGKG). The interval 844–876 (DEELDAIDGSAAEGDEDIAPEADTDDDIAEDEE) is disordered. Residues 856-876 (EGDEDIAPEADTDDDIAEDEE) show a composition bias toward acidic residues.

It belongs to the type II topoisomerase GyrA/ParC subunit family. As to quaternary structure, heterotetramer, composed of two GyrA and two GyrB chains. In the heterotetramer, GyrA contains the active site tyrosine that forms a transient covalent intermediate with DNA, while GyrB binds cofactors and catalyzes ATP hydrolysis.

The protein localises to the cytoplasm. It carries out the reaction ATP-dependent breakage, passage and rejoining of double-stranded DNA.. In terms of biological role, a type II topoisomerase that negatively supercoils closed circular double-stranded (ds) DNA in an ATP-dependent manner to modulate DNA topology and maintain chromosomes in an underwound state. Negative supercoiling favors strand separation, and DNA replication, transcription, recombination and repair, all of which involve strand separation. Also able to catalyze the interconversion of other topological isomers of dsDNA rings, including catenanes and knotted rings. Type II topoisomerases break and join 2 DNA strands simultaneously in an ATP-dependent manner. In Klebsiella oxytoca, this protein is DNA gyrase subunit A.